A 249-amino-acid chain; its full sequence is Putative TrmH family tRNA/rRNA methyltransferase YacO (249 aa).

3 residues coordinate S-adenosyl-L-methionine: Gly-198, Leu-218, and Leu-227.

It belongs to the class IV-like SAM-binding methyltransferase superfamily. RNA methyltransferase TrmH family.

This Bacillus subtilis (strain 168) protein is Putative TrmH family tRNA/rRNA methyltransferase YacO (yacO).